Reading from the N-terminus, the 236-residue chain is tRNA (guanine-N(7)-)-methyltransferase (236 aa).

Residues Asp-35, Glu-60, Asn-87, and Asp-113 each coordinate S-adenosyl-L-methionine. Asp-113 is a catalytic residue. Positions 117 and 149 each coordinate substrate.

This sequence belongs to the class I-like SAM-binding methyltransferase superfamily. TrmB family.

The enzyme catalyses guanosine(46) in tRNA + S-adenosyl-L-methionine = N(7)-methylguanosine(46) in tRNA + S-adenosyl-L-homocysteine. The protein operates within tRNA modification; N(7)-methylguanine-tRNA biosynthesis. Its function is as follows. Catalyzes the formation of N(7)-methylguanine at position 46 (m7G46) in tRNA. The polypeptide is tRNA (guanine-N(7)-)-methyltransferase (Prochlorococcus marinus (strain MIT 9313)).